Consider the following 31-residue polypeptide: Sarcolipin (31 aa).

Topologically, residues 1–7 (MERSTRE) are cytoplasmic. The chain crosses the membrane as a helical span at residues 8 to 26 (LCLNFTVVLITVILIWLLV). Over 27 to 31 (RSYQY) the chain is Lumenal.

It belongs to the sarcolipin family. In terms of assembly, homooligomer. Can also form heterooligomers with other sarcoplasmic/endoplasmic reticulum calcium ATPase (SERCA) regulators ARLN, ERLN, PLN and STRIT1/DWORF. Monomer. Interacts with calcium ATPase ATP2A1/SERCA1. Interacts as a monomer with ATP2A2/SERCA2; the interaction decreases ATP2A2 Ca(2+) affinity. Interacts with VMP1; VMP1 competes with PLN and SLN to prevent them from forming an inhibitory complex with ATP2A2. Skeletal muscle (at protein level).

It localises to the sarcoplasmic reticulum membrane. Its subcellular location is the endoplasmic reticulum membrane. In terms of biological role, reversibly inhibits the activity of ATP2A1/SERCA1 and ATP2A2/SERCA2 in sarcoplasmic reticulum by decreasing the apparent affinity of the ATPase for Ca(2+). Also inhibits the activity of ATP2A3/SERCA3. Modulates calcium re-uptake during muscle relaxation and plays an important role in calcium homeostasis in muscle. Required for muscle-based, non-shivering thermogenesis. The chain is Sarcolipin (SLN) from Oryctolagus cuniculus (Rabbit).